The sequence spans 290 residues: Ribonuclease HIII (290 aa).

Residues 78-290 form the RNase H type-2 domain; the sequence is LPLIGTDEVG…FKNTEKAKNA (213 aa). A divalent metal cation contacts are provided by Asp-84, Glu-85, and Asp-187.

It belongs to the RNase HII family. RnhC subfamily. Mn(2+) serves as cofactor. Mg(2+) is required as a cofactor.

The protein localises to the cytoplasm. It carries out the reaction Endonucleolytic cleavage to 5'-phosphomonoester.. In terms of biological role, endonuclease that specifically degrades the RNA of RNA-DNA hybrids. The protein is Ribonuclease HIII of Streptococcus pneumoniae (strain CGSP14).